The chain runs to 910 residues: Leucine--tRNA ligase (910 aa).

Residues P42–H52 carry the 'HIGH' region motif. The 'KMSKS' region signature appears at T658–S662. Residue K661 participates in ATP binding.

The protein belongs to the class-I aminoacyl-tRNA synthetase family.

The protein localises to the cytoplasm. The catalysed reaction is tRNA(Leu) + L-leucine + ATP = L-leucyl-tRNA(Leu) + AMP + diphosphate. In Acidovorax sp. (strain JS42), this protein is Leucine--tRNA ligase.